The primary structure comprises 622 residues: Telomerase-associated protein of 75 kDa (622 aa).

Component of the telomerase holoenzyme complex, composed of the catalytic core (the catalytic subunit TERT, the telomerase RNA template component TER and TAP65/p65), which is associated with two heterotrimeric subcomplexes: (i) the replication protein A (RPA)-related subcomplex, composed of TEB1, RPA2/TEB2 and RPA3/TEB3 and (ii) the CST-like subcomplex, composed of TAP75/p75, TAP45/p45 and TAP19/p19. TEB1 and the CST-like subcomplex are tethered to the catalytic core by TAP50/p50.

It is found in the chromosome. Its subcellular location is the telomere. In terms of biological role, component of a CST-like subcomplex of the holoenzyme telomerase ribonucleoprotein complex, which stimulates telomerase complementary-strand synthesis. Telomerase is an essential ribonucleoprotein enzyme that copies new telomeric repeats onto chromosome ends by repetitively synthesizing the short telomere-repeat sequence 5'-TTGGGG-3' using an RNA template component TER. The CST-like subcomplex (also named 7-4-1) binds telomeric single-stranded DNA and coordinates telomere G-strand and C-strand synthesis. The protein is Telomerase-associated protein of 75 kDa of Tetrahymena thermophila (strain SB210).